A 338-amino-acid polypeptide reads, in one-letter code: Tetraacyldisaccharide 4'-kinase (338 aa).

53-60 (VAGGAGKT) is an ATP binding site.

Belongs to the LpxK family.

It carries out the reaction a lipid A disaccharide + ATP = a lipid IVA + ADP + H(+). The protein operates within glycolipid biosynthesis; lipid IV(A) biosynthesis; lipid IV(A) from (3R)-3-hydroxytetradecanoyl-[acyl-carrier-protein] and UDP-N-acetyl-alpha-D-glucosamine: step 6/6. Its function is as follows. Transfers the gamma-phosphate of ATP to the 4'-position of a tetraacyldisaccharide 1-phosphate intermediate (termed DS-1-P) to form tetraacyldisaccharide 1,4'-bis-phosphate (lipid IVA). The polypeptide is Tetraacyldisaccharide 4'-kinase (Polaromonas sp. (strain JS666 / ATCC BAA-500)).